A 552-amino-acid polypeptide reads, in one-letter code: Carboxypeptidase Y homolog A (552 aa).

The N-terminal stretch at 1 to 18 is a signal peptide; sequence MRIATSTLLVGAASAAFA. Residues 19–133 constitute a propeptide that is removed on maturation; sequence PQDGTQRVLN…KLDNYNLRAR (115 aa). 5 disulfide bridges follow: Cys-187-Cys-427, Cys-321-Cys-335, Cys-345-Cys-368, Cys-352-Cys-361, and Cys-390-Cys-397. The N-linked (GlcNAc...) asparagine glycan is linked to Asn-218. Ser-274 is an active-site residue. Asp-466 is an active-site residue. Residue Asn-516 is glycosylated (N-linked (GlcNAc...) asparagine). His-527 is an active-site residue.

Belongs to the peptidase S10 family.

Its subcellular location is the vacuole. The catalysed reaction is Release of a C-terminal amino acid with broad specificity.. In terms of biological role, vacuolar carboxypeptidase involved in degradation of small peptides. Digests preferentially peptides containing an aliphatic or hydrophobic residue in P1' position, as well as methionine, leucine or phenylalanine in P1 position of ester substrate. The chain is Carboxypeptidase Y homolog A (CPYA) from Pyricularia oryzae (strain 70-15 / ATCC MYA-4617 / FGSC 8958) (Rice blast fungus).